Here is an 81-residue protein sequence, read N- to C-terminus: High-potential iron-sulfur protein (81 aa).

The [4Fe-4S] cluster site is built by Cys-43, Cys-46, Cys-59, and Cys-73.

This sequence belongs to the high-potential iron-sulfur protein (HiPIP) family. Homodimer.

The protein localises to the periplasm. In terms of biological role, specific class of high-redox-potential 4Fe-4S ferredoxins. Functions in anaerobic electron transport in most purple and in some other photosynthetic bacteria and in at least one genus (Paracoccus) of halophilic, denitrifying bacteria. The protein is High-potential iron-sulfur protein of Halochromatium salexigens (Chromatium salexigens).